Here is a 193-residue protein sequence, read N- to C-terminus: NADPH:quinone oxidoreductase MdaB (193 aa).

FAD is bound by residues 16–23, 69–72, Y108, and 124–127; these read SNGQLNDT, GWWM, and TWNA.

Belongs to the oxidoreductase MdaB family. As to quaternary structure, homodimer. The cofactor is FAD.

It localises to the cytoplasm. The enzyme catalyses a quinone + NADPH + H(+) = a quinol + NADP(+). Functionally, NADPH-specific quinone reductase. In Escherichia coli O157:H7, this protein is NADPH:quinone oxidoreductase MdaB.